A 183-amino-acid polypeptide reads, in one-letter code: Orotate phosphoribosyltransferase (183 aa).

Residues arginine 100, lysine 101, lysine 104, histidine 106, and 126 to 134 (EDVVTTGSS) each bind 5-phospho-alpha-D-ribose 1-diphosphate. Residues threonine 130 and arginine 158 each contribute to the orotate site.

This sequence belongs to the purine/pyrimidine phosphoribosyltransferase family. PyrE subfamily. In terms of assembly, homodimer. It depends on Mg(2+) as a cofactor.

The enzyme catalyses orotidine 5'-phosphate + diphosphate = orotate + 5-phospho-alpha-D-ribose 1-diphosphate. It functions in the pathway pyrimidine metabolism; UMP biosynthesis via de novo pathway; UMP from orotate: step 1/2. Its function is as follows. Catalyzes the transfer of a ribosyl phosphate group from 5-phosphoribose 1-diphosphate to orotate, leading to the formation of orotidine monophosphate (OMP). In Aquifex aeolicus (strain VF5), this protein is Orotate phosphoribosyltransferase.